The primary structure comprises 429 residues: UDP-N-acetylglucosamine 1-carboxyvinyltransferase (429 aa).

22–23 (KN) lines the phosphoenolpyruvate pocket. Position 96 (arginine 96) interacts with UDP-N-acetyl-alpha-D-glucosamine. Cysteine 120 acts as the Proton donor in catalysis. 2-(S-cysteinyl)pyruvic acid O-phosphothioketal is present on cysteine 120. Residues 125–129 (RPVDL), aspartate 310, and isoleucine 332 each bind UDP-N-acetyl-alpha-D-glucosamine.

The protein belongs to the EPSP synthase family. MurA subfamily.

The protein resides in the cytoplasm. The catalysed reaction is phosphoenolpyruvate + UDP-N-acetyl-alpha-D-glucosamine = UDP-N-acetyl-3-O-(1-carboxyvinyl)-alpha-D-glucosamine + phosphate. The protein operates within cell wall biogenesis; peptidoglycan biosynthesis. In terms of biological role, cell wall formation. Adds enolpyruvyl to UDP-N-acetylglucosamine. The sequence is that of UDP-N-acetylglucosamine 1-carboxyvinyltransferase from Caulobacter vibrioides (strain ATCC 19089 / CIP 103742 / CB 15) (Caulobacter crescentus).